The chain runs to 281 residues: 2-dehydro-3-deoxyphosphooctonate aldolase (281 aa).

Belongs to the KdsA family.

It localises to the cytoplasm. The enzyme catalyses D-arabinose 5-phosphate + phosphoenolpyruvate + H2O = 3-deoxy-alpha-D-manno-2-octulosonate-8-phosphate + phosphate. The protein operates within carbohydrate biosynthesis; 3-deoxy-D-manno-octulosonate biosynthesis; 3-deoxy-D-manno-octulosonate from D-ribulose 5-phosphate: step 2/3. It participates in bacterial outer membrane biogenesis; lipopolysaccharide biosynthesis. In Pseudomonas putida (strain GB-1), this protein is 2-dehydro-3-deoxyphosphooctonate aldolase.